The chain runs to 197 residues: ATP-dependent Clp protease proteolytic subunit 1 (197 aa).

Ser-96 serves as the catalytic Nucleophile. The active site involves His-121.

The protein belongs to the peptidase S14 family. As to quaternary structure, fourteen ClpP subunits assemble into 2 heptameric rings which stack back to back to give a disk-like structure with a central cavity, resembling the structure of eukaryotic proteasomes.

Its subcellular location is the cytoplasm. The catalysed reaction is Hydrolysis of proteins to small peptides in the presence of ATP and magnesium. alpha-casein is the usual test substrate. In the absence of ATP, only oligopeptides shorter than five residues are hydrolyzed (such as succinyl-Leu-Tyr-|-NHMec, and Leu-Tyr-Leu-|-Tyr-Trp, in which cleavage of the -Tyr-|-Leu- and -Tyr-|-Trp bonds also occurs).. Cleaves peptides in various proteins in a process that requires ATP hydrolysis. Has a chymotrypsin-like activity. Plays a major role in the degradation of misfolded proteins. The protein is ATP-dependent Clp protease proteolytic subunit 1 of Synechococcus sp. (strain ATCC 27144 / PCC 6301 / SAUG 1402/1) (Anacystis nidulans).